Consider the following 419-residue polypeptide: Putative actin-fragmin kinase DDB_G0279609 (419 aa).

Residues 73 to 94 (INNNNNSINNNNNNNNKNKNKN) are disordered.

The protein belongs to the protein kinase superfamily. AFK Ser/Thr protein kinase family.

This is Putative actin-fragmin kinase DDB_G0279609 from Dictyostelium discoideum (Social amoeba).